Here is a 411-residue protein sequence, read N- to C-terminus: Anthranilate synthase component 1 (411 aa).

Residues serine 27 and 203-205 (PYM) contribute to the L-tryptophan site. 237–238 (GT) serves as a coordination point for chorismate. Glutamate 262 lines the Mg(2+) pocket. Chorismate contacts are provided by residues tyrosine 350, arginine 369, 382 to 384 (GAG), and glycine 384. Mg(2+) is bound at residue glutamate 397.

The protein belongs to the anthranilate synthase component I family. As to quaternary structure, heterotetramer consisting of two non-identical subunits: a beta subunit (TrpG) and a large alpha subunit (TrpE). The cofactor is Mg(2+).

The catalysed reaction is chorismate + L-glutamine = anthranilate + pyruvate + L-glutamate + H(+). It participates in amino-acid biosynthesis; L-tryptophan biosynthesis; L-tryptophan from chorismate: step 1/5. Feedback inhibited by tryptophan. Its function is as follows. Part of a heterotetrameric complex that catalyzes the two-step biosynthesis of anthranilate, an intermediate in the biosynthesis of L-tryptophan. In the first step, the glutamine-binding beta subunit (TrpG) of anthranilate synthase (AS) provides the glutamine amidotransferase activity which generates ammonia as a substrate that, along with chorismate, is used in the second step, catalyzed by the large alpha subunit of AS (TrpE) to produce anthranilate. In the absence of TrpG, TrpE can synthesize anthranilate directly from chorismate and high concentrations of ammonia. The chain is Anthranilate synthase component 1 (trpE) from Archaeoglobus fulgidus (strain ATCC 49558 / DSM 4304 / JCM 9628 / NBRC 100126 / VC-16).